The primary structure comprises 263 residues: MLRNKPRAAVTTKKQTSLLMADQPPPPKPNTCHCSPSLFSSPKFRFFTSKMMMTPFDSDFSLVSPTSILEANPSIFSSKNPKPVSYFEPTIPNPQRFHSPDVFGLADLVKDGDSNRDHSRKPVNKMVLFGSKLRVQIPSSADFGTKTGIRYPPCQLSPCVQTKVLAVSEIDQTEDYTRVISHGPNPTITHIFDNSVFVEATPCSVPLPQPAMETKSTESFLSRCFTCKKNLDQKQDIYIYRGEKGFCSSECRYQEMLLDQMET.

The FLZ-type zinc finger occupies 219–263; sequence SFLSRCFTCKKNLDQKQDIYIYRGEKGFCSSECRYQEMLLDQMET.

Belongs to the FLZ family. Interacts with KIN10 and KIN11 via its FLZ-type zinc finger domain. Interacts with KINB1 and KINB2 via its N-terminal part. Interacts with TZF4, TZF5 and TZF6. Interacts with MPK3 and MPK6.

It is found in the cytoplasm. Its subcellular location is the stress granule. The protein localises to the P-body. May act as an adapter to facilitate the interaction of SnRK1 complex with effector proteins, conferring tissue- and stimulus-type specific differences in the SnRK1 regulation pathway. Involved in seed dormancy control. In Arabidopsis thaliana (Mouse-ear cress), this protein is Protein MARD1.